Reading from the N-terminus, the 161-residue chain is Phosphopantetheine adenylyltransferase (161 aa).

Threonine 10 contacts substrate. ATP is bound by residues 10 to 11 and histidine 18; that span reads TF. Substrate-binding residues include lysine 42, methionine 74, and arginine 88. ATP contacts are provided by residues 89–91, glutamate 99, and 124–130; these read GVR and LSFVSSS.

It belongs to the bacterial CoaD family. In terms of assembly, homohexamer. Mg(2+) serves as cofactor.

Its subcellular location is the cytoplasm. It catalyses the reaction (R)-4'-phosphopantetheine + ATP + H(+) = 3'-dephospho-CoA + diphosphate. It functions in the pathway cofactor biosynthesis; coenzyme A biosynthesis; CoA from (R)-pantothenate: step 4/5. In terms of biological role, reversibly transfers an adenylyl group from ATP to 4'-phosphopantetheine, yielding dephospho-CoA (dPCoA) and pyrophosphate. This chain is Phosphopantetheine adenylyltransferase, found in Proteus mirabilis (strain HI4320).